The chain runs to 394 residues: Hemagglutinin-esterase (394 aa).

The N-terminal stretch at 1-16 (MARFIILFLLLAPVYS) is a signal peptide. At 17 to 347 (RLCLRNHPDT…NNRVDAIPPQ (331 aa)) the chain is on the extracellular side. Serine 32 is a catalytic residue. A Cell attachment site motif is present at residues 119 to 121 (RGD). Catalysis depends on residues aspartate 261 and histidine 264. An N-linked (GlcNAc...) asparagine; by host glycan is attached at asparagine 333. Positions 335 to 358 (TDVNNRVDAIPPQLSNIFISMGVA) are highly polymorphic region. Residues 348-368 (LSNIFISMGVAGFGIALFLAG) form a helical membrane-spanning segment. Residues 369-394 (WKACVWIAAFMYKSRGRNPPANLSVA) are Cytoplasmic-facing.

It is found in the host membrane. The protein resides in the virion membrane. The catalysed reaction is N-acetyl-9-O-acetylneuraminate + H2O = N-acetylneuraminate + acetate + H(+). It carries out the reaction N-acetyl-4-O-acetylneuraminate + H2O = N-acetylneuraminate + acetate + H(+). In terms of biological role, performs attachment to host receptor thereby inducing virus particle entry into target cell. Binds specifically to 5-N-acetyl-4-O-acetyl neuraminic acid on host cells, which plays a major role in cell tropism of the virus. ALso mediates de-O-acetylation of N-acetyl-4-O-acetylneuraminic acid. This receptor-destroying activity is important for virus release as it probably helps preventing self-aggregation and ensures the efficient spread of the progeny virus from cell to cell. The highly polymorphic region (HPR) modulates the virulence in host. Catalyzes the removal of terminal sialic acid residues from viral and cellular glycoconjugates. The chain is Hemagglutinin-esterase from Gadus morhua (Atlantic cod).